The primary structure comprises 436 residues: Glutamyl-tRNA reductase (436 aa).

Substrate contacts are provided by residues 49-52, Ser-109, 114-116, and Gln-120; these read TCNR and EGQ. Residue Cys-50 is the Nucleophile of the active site. 198 to 203 is an NADP(+) binding site; the sequence is GAGRMS.

This sequence belongs to the glutamyl-tRNA reductase family. As to quaternary structure, homodimer.

The catalysed reaction is (S)-4-amino-5-oxopentanoate + tRNA(Glu) + NADP(+) = L-glutamyl-tRNA(Glu) + NADPH + H(+). Its pathway is porphyrin-containing compound metabolism; protoporphyrin-IX biosynthesis; 5-aminolevulinate from L-glutamyl-tRNA(Glu): step 1/2. It participates in porphyrin-containing compound metabolism; chlorophyll biosynthesis. In terms of biological role, catalyzes the NADPH-dependent reduction of glutamyl-tRNA(Glu) to glutamate 1-semialdehyde (GSA). The chain is Glutamyl-tRNA reductase from Prochlorococcus marinus (strain MIT 9312).